The primary structure comprises 363 residues: Phosphoserine aminotransferase (363 aa).

Arg-41 is an L-glutamate binding site. Pyridoxal 5'-phosphate contacts are provided by residues 75–76 (AS), Trp-100, Thr-155, Asp-175, and Gln-198. Lys-199 carries the N6-(pyridoxal phosphate)lysine modification. 239–240 (NT) contacts pyridoxal 5'-phosphate.

The protein belongs to the class-V pyridoxal-phosphate-dependent aminotransferase family. SerC subfamily. As to quaternary structure, homodimer. Pyridoxal 5'-phosphate is required as a cofactor.

Its subcellular location is the cytoplasm. The enzyme catalyses O-phospho-L-serine + 2-oxoglutarate = 3-phosphooxypyruvate + L-glutamate. It carries out the reaction 4-(phosphooxy)-L-threonine + 2-oxoglutarate = (R)-3-hydroxy-2-oxo-4-phosphooxybutanoate + L-glutamate. It functions in the pathway amino-acid biosynthesis; L-serine biosynthesis; L-serine from 3-phospho-D-glycerate: step 2/3. Its function is as follows. Catalyzes the reversible conversion of 3-phosphohydroxypyruvate to phosphoserine and of 3-hydroxy-2-oxo-4-phosphonooxybutanoate to phosphohydroxythreonine. The sequence is that of Phosphoserine aminotransferase from Streptococcus agalactiae serotype III (strain NEM316).